We begin with the raw amino-acid sequence, 510 residues long: uncharacterized protein (510 aa).

Residues 1 to 19 (MLILLILYFLFLQLHIFDS) form the signal peptide. Residues 28-48 (IYIHYAICKFIFLLEIYKLIA) traverse the membrane as a helical segment.

It localises to the host membrane. This is an uncharacterized protein from Sulfolobus islandicus rod-shaped virus 1 (SIRV-1).